The following is a 212-amino-acid chain: Ropporin-1 (212 aa).

Residues 12–43 form the RIIa domain; that stretch reads PELPELLKQFTKAAIRTQPPDLIQWAAEYFGA. Ser-56 is subject to Phosphoserine. Residues 209 to 212 are interaction with RHPN1; that stretch reads VRLE.

It belongs to the ropporin family. In terms of assembly, homodimer. Interacts with AKAP3. May interact with SPA17. Interacts with RHPN1. Interacts with FSCB; the interaction increases upon spermatozoa capacitation conditions. Interacts with CFAP61. In terms of processing, sumoylated, sumoylation decreases upon spermatozoa capacitation conditions.

The protein localises to the cell projection. It is found in the cilium. It localises to the flagellum. In terms of biological role, important for male fertility. With ROPN1L, involved in fibrous sheath integrity and sperm motility, plays a role in PKA-dependent signaling processes required for spermatozoa capacitation. The protein is Ropporin-1 (Ropn1) of Rattus norvegicus (Rat).